The primary structure comprises 488 residues: Ribulose bisphosphate carboxylase large chain (488 aa).

Asn127 and Thr177 together coordinate substrate. The active-site Proton acceptor is the Lys179. Substrate is bound at residue Lys181. Mg(2+) is bound by residues Lys205, Asp207, and Glu208. At Lys205 the chain carries N6-carboxylysine. His297 functions as the Proton acceptor in the catalytic mechanism. 3 residues coordinate substrate: Arg298, His330, and Ser382.

Belongs to the RuBisCO large chain family. Type I subfamily. In terms of assembly, heterohexadecamer of 8 large chains and 8 small chains. The cofactor is Mg(2+).

It is found in the plastid. The protein resides in the chloroplast. The catalysed reaction is 2 (2R)-3-phosphoglycerate + 2 H(+) = D-ribulose 1,5-bisphosphate + CO2 + H2O. It catalyses the reaction D-ribulose 1,5-bisphosphate + O2 = 2-phosphoglycolate + (2R)-3-phosphoglycerate + 2 H(+). Functionally, ruBisCO catalyzes two reactions: the carboxylation of D-ribulose 1,5-bisphosphate, the primary event in carbon dioxide fixation, as well as the oxidative fragmentation of the pentose substrate in the photorespiration process. Both reactions occur simultaneously and in competition at the same active site. The chain is Ribulose bisphosphate carboxylase large chain from Antithamnion sp. (Red alga).